A 628-amino-acid chain; its full sequence is Kinesin-like protein KIN-10B (628 aa).

The Kinesin motor domain maps to 20–340 (NVRVVLRVRP…VSLAARSRHI (321 aa)). 114 to 121 (GATGSGKT) serves as a coordination point for ATP. Positions 496–519 (SPIDSNAKPNSAHGSSPFLKPMTP) are disordered. Over residues 498–509 (IDSNAKPNSAHG) the composition is skewed to polar residues.

The protein belongs to the TRAFAC class myosin-kinesin ATPase superfamily. Kinesin family. KIN-10 subfamily.

The protein is Kinesin-like protein KIN-10B of Arabidopsis thaliana (Mouse-ear cress).